Reading from the N-terminus, the 307-residue chain is Recombination-associated protein RdgC (307 aa).

This sequence belongs to the RdgC family.

The protein resides in the cytoplasm. Its subcellular location is the nucleoid. Functionally, may be involved in recombination. The polypeptide is Recombination-associated protein RdgC (Burkholderia cenocepacia (strain ATCC BAA-245 / DSM 16553 / LMG 16656 / NCTC 13227 / J2315 / CF5610) (Burkholderia cepacia (strain J2315))).